The following is a 147-amino-acid chain: Myosin-2 essential light chain (147 aa).

EF-hand domains follow at residues 7–42 (DQLA…LGQN), 80–115 (DTAD…LGEK), and 115–147 (KLTD…VMSG). Ser-30 is subject to Phosphoserine. Asp-93, Asp-95, Ser-97, Tyr-99, and Glu-104 together coordinate Ca(2+).

As to quaternary structure, myosin is a hexamer of 2 heavy chains and 4 light chains.

This chain is Myosin-2 essential light chain (Mlc-c), found in Drosophila melanogaster (Fruit fly).